Reading from the N-terminus, the 154-residue chain is 3-hydroxyacyl-[acyl-carrier-protein] dehydratase FabZ (154 aa).

The active site involves His-57.

Belongs to the thioester dehydratase family. FabZ subfamily.

The protein localises to the cytoplasm. The enzyme catalyses a (3R)-hydroxyacyl-[ACP] = a (2E)-enoyl-[ACP] + H2O. Functionally, involved in unsaturated fatty acids biosynthesis. Catalyzes the dehydration of short chain beta-hydroxyacyl-ACPs and long chain saturated and unsaturated beta-hydroxyacyl-ACPs. The chain is 3-hydroxyacyl-[acyl-carrier-protein] dehydratase FabZ from Allorhizobium ampelinum (strain ATCC BAA-846 / DSM 112012 / S4) (Agrobacterium vitis (strain S4)).